Here is a 279-residue protein sequence, read N- to C-terminus: MLHHYYSGGAGHHQDVAAAGSPGDMASSTFSLFFPMSNGQCWPPSTVEESAAYDDHSTVTTSPSSPSSSSTGSVDCTLSLGTPSSRRAEPVAAAAPAANHGAPVPAHYPSLSAATVSWDATAESYYCGQQGRPATGAAKCAAGAGHDALLDRRCANCGTASTPLWRNGPRGPKSLCNACGIRYKKEERRAAATTTTADGAAGCGFITAQRGRGSTAAKAAPAVTTCGEETSPYVVGGGGGGGEVADAAYLAWRLNVVPPAATATAFSVWPERASLYHYN.

Residues 52-94 (AYDDHSTVTTSPSSPSSSSTGSVDCTLSLGTPSSRRAEPVAAA) are disordered. A compositionally biased stretch (low complexity) spans 58–74 (TVTTSPSSPSSSSTGSV). The GATA-type zinc-finger motif lies at 154–179 (CANCGTASTPLWRNGPRGPKSLCNAC).

Belongs to the type IV zinc-finger family. Class B subfamily. Highly expressed in inflorescences. Expressed in vascular bundles of root stele within the elongation zones, of elongating upper internodes and of the junctions of leaf blades and sheaths.

Probable transcription factor that regulates organogenesis during transition from the vegetative to the reproductive phase. Regulates the expression of CYP78A11/PLA1, HD3A and MADS1 during reproductive development in rice. May act upstream of CYP78A11/PLA1 during panicle development. Acts independently of the photoperiodic and gibberellin signaling pathways. In Oryza sativa subsp. japonica (Rice), this protein is GATA transcription factor 15.